A 768-amino-acid chain; its full sequence is Probable LRR receptor-like serine/threonine-protein kinase At4g37250 (768 aa).

Positions 1 to 21 (MRMELISVIFFFFCSVLSSSA) are cleaved as a signal peptide. At 22 to 328 (LNSDGLVLMK…PNPRTGLRPG (307 aa)) the chain is on the extracellular side. N-linked (GlcNAc...) asparagine glycosylation occurs at Asn-64. LRR repeat units follow at residues 67–90 (KVLTLSLPNSQLLGSIPSDLGSLL), 91–112 (TLQSLDLSNNSFNGPLPVSFFN), 115–137 (ELRFLDLSSNMISGEIPSAIGDL), 139–162 (NLLTLNLSDNALAGKLPTNLASLR), 163–183 (NLTVVSLENNYFSGEIPGGWR), 184–206 (VVEFLDLSSNLINGSLPPDFGGY), 207–229 (SLQYLNVSFNQISGEIPPEIGVN), and 232–254 (RNVTVDLSFNNLTGPIPDSPVFL). Residue Asn-99 is glycosylated (N-linked (GlcNAc...) asparagine). 6 N-linked (GlcNAc...) asparagine glycosylation sites follow: Asn-144, Asn-163, Asn-196, Asn-212, Asn-233, and Asn-242. The interval 301 to 324 (PNTIGSNPVTDPNSQQTDPNPRTG) is disordered. Positions 303–320 (TIGSNPVTDPNSQQTDPN) are enriched in polar residues. The chain crosses the membrane as a helical span at residues 329–349 (VIIGIVVGDIAGIGILAVIFL). Residues 350–768 (YIYRCKKNKI…IKSSSFHYGH (419 aa)) lie on the Cytoplasmic side of the membrane. The disordered stretch occupies residues 361–432 (DNNNNDKQRT…NANQRSGDNK (72 aa)). The span at 378-387 (STFSSSSSSP) shows a compositional bias: low complexity. The segment covering 407 to 420 (PSEEEDEDDEDEES) has biased composition (acidic residues). In terms of domain architecture, Protein kinase spans 449–756 (KASAYILGAT…AVLERFHPNS (308 aa)). Phosphoserine occurs at positions 451 and 531. Phosphothreonine is present on Thr-553. At Ser-662 the chain carries Phosphoserine.

The protein belongs to the protein kinase superfamily. Ser/Thr protein kinase family.

The protein resides in the membrane. The enzyme catalyses L-seryl-[protein] + ATP = O-phospho-L-seryl-[protein] + ADP + H(+). It catalyses the reaction L-threonyl-[protein] + ATP = O-phospho-L-threonyl-[protein] + ADP + H(+). The chain is Probable LRR receptor-like serine/threonine-protein kinase At4g37250 from Arabidopsis thaliana (Mouse-ear cress).